We begin with the raw amino-acid sequence, 512 residues long: Eukaryotic translation initiation factor 3 subunit L (512 aa).

Positions 291–477 (DAFRLFESIL…GERQFTDSVD (187 aa)) constitute a PCI domain.

Belongs to the eIF-3 subunit L family. Component of the eukaryotic translation initiation factor 3 (eIF-3) complex.

The protein localises to the cytoplasm. Functionally, component of the eukaryotic translation initiation factor 3 (eIF-3) complex, which is involved in protein synthesis of a specialized repertoire of mRNAs and, together with other initiation factors, stimulates binding of mRNA and methionyl-tRNAi to the 40S ribosome. The eIF-3 complex specifically targets and initiates translation of a subset of mRNAs involved in cell proliferation. In Monosiga brevicollis (Choanoflagellate), this protein is Eukaryotic translation initiation factor 3 subunit L.